The sequence spans 261 residues: 3-hydroxyacyl-CoA dehydrogenase type-2 (261 aa).

A2 bears the N-acetylalanine mark. NAD(+) is bound by residues S20, L22, and D41. At K53 the chain carries N6-acetyllysine; alternate. At K53 the chain carries N6-succinyllysine; alternate. 2 residues coordinate NAD(+): D64 and V65. Residue K69 is modified to N6-acetyllysine. NAD(+) is bound at residue C91. N6-acetyllysine is present on residues K99 and K105. Substrate is bound at residue S155. NAD(+)-binding residues include Y168, K172, F201, and T203. Y168 serves as the catalytic Proton acceptor. The residue at position 212 (K212) is an N6-acetyllysine; alternate. K212 carries the post-translational modification N6-succinyllysine; alternate.

It belongs to the short-chain dehydrogenases/reductases (SDR) family. As to quaternary structure, homotetramer. Component of mitochondrial ribonuclease P, a complex composed of TRMT10C/MRPP1, HSD17B10/MRPP2 and PRORP/MRPP3. Interacts with TRMT10C/MRPP1; forming the MRPP1-MRPP2 subcomplex of the mitochondrial ribonuclease P complex.

The protein localises to the mitochondrion. The protein resides in the mitochondrion matrix. Its subcellular location is the mitochondrion nucleoid. It carries out the reaction a (3S)-3-hydroxyacyl-CoA + NAD(+) = a 3-oxoacyl-CoA + NADH + H(+). The catalysed reaction is (2S,3S)-3-hydroxy-2-methylbutanoyl-CoA + NAD(+) = 2-methyl-3-oxobutanoyl-CoA + NADH + H(+). The enzyme catalyses testosterone + NAD(+) = androst-4-ene-3,17-dione + NADH + H(+). It catalyses the reaction 5alpha-androstane-3alpha,17beta-diol + NAD(+) = 17beta-hydroxy-5alpha-androstan-3-one + NADH + H(+). It carries out the reaction 17beta-estradiol + NAD(+) = estrone + NADH + H(+). The catalysed reaction is cholate + NAD(+) = 3alpha,12alpha-dihydroxy-7-oxo-5beta-cholanate + NADH + H(+). The enzyme catalyses (3S)-3-hydroxybutanoyl-CoA + NAD(+) = acetoacetyl-CoA + NADH + H(+). It catalyses the reaction (3S)-hydroxyoctanoyl-CoA + NAD(+) = 3-oxooctanoyl-CoA + NADH + H(+). It carries out the reaction (3S)-hydroxyhexadecanoyl-CoA + NAD(+) = 3-oxohexadecanoyl-CoA + NADH + H(+). The catalysed reaction is 17beta-hydroxy-5alpha-androstan-3-one + NAD(+) = 5alpha-androstan-3,17-dione + NADH + H(+). The enzyme catalyses 5alpha-pregnan-20beta-ol-3-one + NAD(+) = 5alpha-pregnane-3,20-dione + NADH + H(+). It catalyses the reaction 3alpha-hydroxy-5alpha-pregnan-20-one + NAD(+) = 5alpha-pregnane-3,20-dione + NADH + H(+). It carries out the reaction cortisone + NAD(+) = 17alpha-hydroxypregn-4-en-3,11,20-trione-21-al + NADH + H(+). The catalysed reaction is 11-dehydrocorticosterone + NAD(+) = pregn-4-ene-3,11,20,21-tetraone + NADH + H(+). The enzyme catalyses cortisol + NAD(+) = 11beta,17alpha-dihydroxypregn-4-ene-3,20,21-trione + NADH + H(+). It catalyses the reaction chenodeoxycholate + NAD(+) = 7-oxolithocholate + NADH + H(+). It carries out the reaction ursodeoxycholate + NAD(+) = 7-oxolithocholate + NADH + H(+). The catalysed reaction is 3beta,7beta-dihydroxy-5beta-cholan-24-oate + NAD(+) = 3beta-hydroxy-7-oxo-5beta-cholan-24-oate + NADH + H(+). Its pathway is amino-acid degradation; L-isoleucine degradation. It functions in the pathway lipid metabolism; fatty acid beta-oxidation. The protein operates within steroid metabolism. It participates in lipid metabolism; bile acid biosynthesis. Its function is as follows. Mitochondrial dehydrogenase involved in pathways of fatty acid, branched-chain amino acid and steroid metabolism. Acts as (S)-3-hydroxyacyl-CoA dehydrogenase in mitochondrial fatty acid beta-oxidation, a major degradation pathway of fatty acids. Catalyzes the third step in the beta-oxidation cycle, namely the reversible conversion of (S)-3-hydroxyacyl-CoA to 3-ketoacyl-CoA. Preferentially accepts straight medium- and short-chain acyl-CoA substrates with highest efficiency for (3S)-hydroxybutanoyl-CoA. Acts as 3-hydroxy-2-methylbutyryl-CoA dehydrogenase in branched-chain amino acid catabolic pathway. Catalyzes the oxidation of 3-hydroxy-2-methylbutanoyl-CoA into 2-methyl-3-oxobutanoyl-CoA, a step in isoleucine degradation pathway. Has hydroxysteroid dehydrogenase activity toward steroid hormones and bile acids. Catalyzes the oxidation of 3alpha-, 17beta-, 20beta- and 21-hydroxysteroids and 7alpha- and 7beta-hydroxy bile acids. Oxidizes allopregnanolone/brexanolone at the 3alpha-hydroxyl group, which is known to be critical for the activation of gamma-aminobutyric acid receptors (GABAARs) chloride channel. Has phospholipase C-like activity toward cardiolipin and its oxidized species. Likely oxidizes the 2'-hydroxyl in the head group of cardiolipin to form a ketone intermediate that undergoes nucleophilic attack by water and fragments into diacylglycerol, dihydroxyacetone and orthophosphate. Has higher affinity for cardiolipin with oxidized fatty acids and may degrade these species during the oxidative stress response to protect cells from apoptosis. By interacting with intracellular amyloid-beta, it may contribute to the neuronal dysfunction associated with Alzheimer disease (AD). Essential for structural and functional integrity of mitochondria. In terms of biological role, in addition to mitochondrial dehydrogenase activity, moonlights as a component of mitochondrial ribonuclease P, a complex that cleaves tRNA molecules in their 5'-ends. Together with TRMT10C/MRPP1, forms a subcomplex of the mitochondrial ribonuclease P, named MRPP1-MRPP2 subcomplex, which displays functions that are independent of the ribonuclease P activity. The MRPP1-MRPP2 subcomplex catalyzes the formation of N(1)-methylguanine and N(1)-methyladenine at position 9 (m1G9 and m1A9, respectively) in tRNAs; HSD17B10/MRPP2 acting as a non-catalytic subunit. The MRPP1-MRPP2 subcomplex also acts as a tRNA maturation platform: following 5'-end cleavage by the mitochondrial ribonuclease P complex, the MRPP1-MRPP2 subcomplex enhances the efficiency of 3'-processing catalyzed by ELAC2, retains the tRNA product after ELAC2 processing and presents the nascent tRNA to the mitochondrial CCA tRNA nucleotidyltransferase TRNT1 enzyme. Associates with mitochondrial DNA complexes at the nucleoids to initiate RNA processing and ribosome assembly. This Bos taurus (Bovine) protein is 3-hydroxyacyl-CoA dehydrogenase type-2 (HSD17B10).